We begin with the raw amino-acid sequence, 630 residues long: NUAK family SNF1-like kinase 2 (630 aa).

Residue Met1 is modified to N-acetylmethionine. Residues 57 to 307 (YEFLETLGKG…LEDVASHWWV (251 aa)) form the Protein kinase domain. ATP is bound by residues 63 to 71 (LGKGTYGKV) and Lys85. Residue Asp179 is the Proton acceptor of the active site. Thr212 is modified (phosphothreonine). Disordered regions lie at residues 361–504 (HVPG…RLHR) and 521–566 (GTAP…LDLP). Residues 464 to 476 (SGYYSSPEPSESG) are compositionally biased toward low complexity. A phosphoserine mark is found at Ser529, Ser550, Ser553, and Ser579.

The protein belongs to the protein kinase superfamily. CAMK Ser/Thr protein kinase family. SNF1 subfamily. Mg(2+) is required as a cofactor. Phosphorylated at Thr-212 by STK11/LKB1 in complex with STE20-related adapter-alpha (STRADA) pseudo kinase and CAB39. Autophosphorylation is also possible at Thr-212. As to expression, expressed in liver, skin, testis, uterus, ovary, adrenal gland and brain (at protein level). Expressed in kidney, heart, skin, spleen, lung, uterus, liver and the exocrine and endocrine compartments of the human pancreas. A kinase-inactive isoform also appears to be expressed in the skin, spleen, lung, uterus, liver and testis.

It carries out the reaction L-seryl-[protein] + ATP = O-phospho-L-seryl-[protein] + ADP + H(+). The enzyme catalyses L-threonyl-[protein] + ATP = O-phospho-L-threonyl-[protein] + ADP + H(+). With respect to regulation, activated by phosphorylation on Thr-212 by STK11 in complex with STE20-related adapter-alpha (STRAD alpha) pseudo kinase and CAB39. Functionally, stress-activated kinase involved in tolerance to glucose starvation. Induces cell-cell detachment by increasing F-actin conversion to G-actin. Expression is induced by CD95 or TNF-alpha, via NF-kappa-B. Protects cells from CD95-mediated apoptosis and is required for the increased motility and invasiveness of CD95-activated tumor cells. Phosphorylates LATS1 and LATS2. Plays a key role in neural tube closure during embryonic development through LATS2 phosphorylation and regulation of the nuclear localization of YAP1 a critical downstream regulatory target in the Hippo signaling pathway. The sequence is that of NUAK family SNF1-like kinase 2 from Rattus norvegicus (Rat).